Consider the following 446-residue polypeptide: Exodeoxyribonuclease 7 large subunit (446 aa).

This sequence belongs to the XseA family. As to quaternary structure, heterooligomer composed of large and small subunits.

Its subcellular location is the cytoplasm. The enzyme catalyses Exonucleolytic cleavage in either 5'- to 3'- or 3'- to 5'-direction to yield nucleoside 5'-phosphates.. In terms of biological role, bidirectionally degrades single-stranded DNA into large acid-insoluble oligonucleotides, which are then degraded further into small acid-soluble oligonucleotides. This Streptococcus pneumoniae serotype 4 (strain ATCC BAA-334 / TIGR4) protein is Exodeoxyribonuclease 7 large subunit.